The following is a 259-amino-acid chain: Phosphate import ATP-binding protein PstB (259 aa).

Residues 5 to 248 enclose the ABC transporter domain; sequence IDVSGLHVYY…NKIFTKPEKK (244 aa). 37–44 serves as a coordination point for ATP; the sequence is GSSGCGKS.

It belongs to the ABC transporter superfamily. Phosphate importer (TC 3.A.1.7) family. The complex is composed of two ATP-binding proteins (PstB), two transmembrane proteins (PstC and PstA) and a solute-binding protein (PstS).

Its subcellular location is the cell membrane. It carries out the reaction phosphate(out) + ATP + H2O = ADP + 2 phosphate(in) + H(+). Its function is as follows. Part of the ABC transporter complex PstSACB involved in phosphate import. Responsible for energy coupling to the transport system. In Thermobifida fusca (strain YX), this protein is Phosphate import ATP-binding protein PstB.